The primary structure comprises 201 residues: Probable thymidylate kinase (201 aa).

Residue 10–17 (GIDGSGKS) participates in ATP binding.

It belongs to the thymidylate kinase family.

The catalysed reaction is dTMP + ATP = dTDP + ADP. The chain is Probable thymidylate kinase from Methanococcoides burtonii (strain DSM 6242 / NBRC 107633 / OCM 468 / ACE-M).